Here is a 124-residue protein sequence, read N- to C-terminus: Small ribosomal subunit protein uS12c (124 aa).

The protein belongs to the universal ribosomal protein uS12 family. In terms of assembly, part of the 30S ribosomal subunit.

The protein localises to the plastid. In terms of biological role, with S4 and S5 plays an important role in translational accuracy. Located at the interface of the 30S and 50S subunits. This is Small ribosomal subunit protein uS12c (rps12) from Helicosporidium sp. subsp. Simulium jonesii (Green alga).